Here is a 662-residue protein sequence, read N- to C-terminus: UvrABC system protein B (662 aa).

The region spanning Asp-31 to Arg-188 is the Helicase ATP-binding domain. ATP is bound at residue Gly-44–Thr-51. Residues Tyr-97–Val-120 carry the Beta-hairpin motif. Residues Gln-435–Ile-601 enclose the Helicase C-terminal domain. One can recognise a UVR domain in the interval Lys-626–Leu-661.

Belongs to the UvrB family. In terms of assembly, forms a heterotetramer with UvrA during the search for lesions. Interacts with UvrC in an incision complex.

Its subcellular location is the cytoplasm. Functionally, the UvrABC repair system catalyzes the recognition and processing of DNA lesions. A damage recognition complex composed of 2 UvrA and 2 UvrB subunits scans DNA for abnormalities. Upon binding of the UvrA(2)B(2) complex to a putative damaged site, the DNA wraps around one UvrB monomer. DNA wrap is dependent on ATP binding by UvrB and probably causes local melting of the DNA helix, facilitating insertion of UvrB beta-hairpin between the DNA strands. Then UvrB probes one DNA strand for the presence of a lesion. If a lesion is found the UvrA subunits dissociate and the UvrB-DNA preincision complex is formed. This complex is subsequently bound by UvrC and the second UvrB is released. If no lesion is found, the DNA wraps around the other UvrB subunit that will check the other stand for damage. This Streptococcus pneumoniae serotype 2 (strain D39 / NCTC 7466) protein is UvrABC system protein B.